Here is a 296-residue protein sequence, read N- to C-terminus: MLKIGTRGSLLATTQSGHVQEWLQQKGYEAELHIVTTQGDVNMAPVERIGVGVFTQALREAVDRGECEIAVHSFKDLPTAADERFDLVVPQRQDVREALIARDGLTLKELPEGARVGTSAPRRISQLRAMRPDLDIRPLRGNIDTRMGKVTSGELDAVLLAYAGLVRAGYAERATEVFDPEVFMPAPAQGALAIEAVKGTEAAKAIALLADGPATAATRAERTVLSQLEAGCTAPVAATSHWEGEQLVVRGGVFALDGSRQLIAQAQGAASEAEELGRAVSKELFAQGAADVLAAE.

An S-(dipyrrolylmethanemethyl)cysteine modification is found at C232.

This sequence belongs to the HMBS family. Monomer. Requires dipyrromethane as cofactor.

It catalyses the reaction 4 porphobilinogen + H2O = hydroxymethylbilane + 4 NH4(+). The protein operates within porphyrin-containing compound metabolism; protoporphyrin-IX biosynthesis; coproporphyrinogen-III from 5-aminolevulinate: step 2/4. Tetrapolymerization of the monopyrrole PBG into the hydroxymethylbilane pre-uroporphyrinogen in several discrete steps. The chain is Porphobilinogen deaminase from Corynebacterium aurimucosum (strain ATCC 700975 / DSM 44827 / CIP 107346 / CN-1) (Corynebacterium nigricans).